The primary structure comprises 360 residues: Peptide chain release factor 1 (360 aa).

N5-methylglutamine is present on Q235. The tract at residues 285 to 311 is disordered; it reads KRQQAQASERRNLLGSGDRSDRHRTYN. Residues 292–308 show a composition bias toward basic and acidic residues; it reads SERRNLLGSGDRSDRHR.

It belongs to the prokaryotic/mitochondrial release factor family. In terms of processing, methylated by PrmC. Methylation increases the termination efficiency of RF1.

The protein localises to the cytoplasm. Functionally, peptide chain release factor 1 directs the termination of translation in response to the peptide chain termination codons UAG and UAA. The chain is Peptide chain release factor 1 from Hamiltonella defensa subsp. Acyrthosiphon pisum (strain 5AT).